The primary structure comprises 426 residues: NADH-quinone oxidoreductase subunit D 1 (426 aa).

The interval 1 to 51 (MATEFTVPDSAARIATAQQAGGGTPVRSGPPDEGGEFSGDRMSLSMGPSHP) is disordered.

This sequence belongs to the complex I 49 kDa subunit family. In terms of assembly, NDH-1 is composed of 14 different subunits. Subunits NuoB, C, D, E, F, and G constitute the peripheral sector of the complex.

It localises to the cell inner membrane. It catalyses the reaction a quinone + NADH + 5 H(+)(in) = a quinol + NAD(+) + 4 H(+)(out). Functionally, NDH-1 shuttles electrons from NADH, via FMN and iron-sulfur (Fe-S) centers, to quinones in the respiratory chain. The immediate electron acceptor for the enzyme in this species is believed to be ubiquinone. Couples the redox reaction to proton translocation (for every two electrons transferred, four hydrogen ions are translocated across the cytoplasmic membrane), and thus conserves the redox energy in a proton gradient. In Opitutus terrae (strain DSM 11246 / JCM 15787 / PB90-1), this protein is NADH-quinone oxidoreductase subunit D 1.